Here is a 634-residue protein sequence, read N- to C-terminus: Threonine--tRNA ligase (634 aa).

The region spanning 1–61 (MINITLPDGS…DHDASLRIIT (61 aa)) is the TGS domain. A catalytic region spans residues 243-534 (DHRRIGKAQD…LIEHHAGAFP (292 aa)). Zn(2+) contacts are provided by C334, H385, and H511.

The protein belongs to the class-II aminoacyl-tRNA synthetase family. In terms of assembly, homodimer. Zn(2+) is required as a cofactor.

It is found in the cytoplasm. The enzyme catalyses tRNA(Thr) + L-threonine + ATP = L-threonyl-tRNA(Thr) + AMP + diphosphate + H(+). Functionally, catalyzes the attachment of threonine to tRNA(Thr) in a two-step reaction: L-threonine is first activated by ATP to form Thr-AMP and then transferred to the acceptor end of tRNA(Thr). Also edits incorrectly charged L-seryl-tRNA(Thr). The protein is Threonine--tRNA ligase of Xanthomonas oryzae pv. oryzae (strain MAFF 311018).